Here is a 510-residue protein sequence, read N- to C-terminus: Cytochrome P450 4A6 (510 aa).

Residues 1 to 4 constitute a propeptide that is removed on maturation; it reads MSVS. Residues glutamate 321 and cysteine 457 each coordinate heme.

Belongs to the cytochrome P450 family. Requires heme as cofactor. As to expression, liver; kidney.

It is found in the endoplasmic reticulum membrane. Its subcellular location is the microsome membrane. The catalysed reaction is an omega-methyl-long-chain fatty acid + reduced [NADPH--hemoprotein reductase] + O2 = an omega-hydroxy-long-chain fatty acid + oxidized [NADPH--hemoprotein reductase] + H2O + H(+). Its function is as follows. Cytochromes P450 are a group of heme-thiolate monooxygenases. In liver microsomes, this enzyme is involved in an NADPH-dependent electron transport pathway. It oxidizes a variety of structurally unrelated compounds, including steroids, fatty acids, and xenobiotics. The kidney P-450 system is rather specialized for the omega-hydroxylation of fatty acids. Both P450-KA1 and P450-KA2 catalyze the omega- and (omega-1)-hydroxylation of various fatty acids with no drug-metabolizing activity, and hydroxylate prostaglandin A1 and A2 solely at the omega-position. This chain is Cytochrome P450 4A6 (CYP4A6), found in Oryctolagus cuniculus (Rabbit).